We begin with the raw amino-acid sequence, 189 residues long: Glucose-6-phosphate isomerase (189 aa).

His-88, His-90, Glu-97, and His-136 together coordinate Fe cation.

The protein belongs to the archaeal-type GPI family. As to quaternary structure, homodimer.

Its subcellular location is the cytoplasm. It carries out the reaction alpha-D-glucose 6-phosphate = beta-D-fructose 6-phosphate. It functions in the pathway carbohydrate degradation; glycolysis; D-glyceraldehyde 3-phosphate and glycerone phosphate from D-glucose: step 2/4. The protein is Glucose-6-phosphate isomerase of Thermococcus onnurineus (strain NA1).